We begin with the raw amino-acid sequence, 307 residues long: MSYFRTAILLAGLTGLFMGVGYLIGGAAGAMIALVVAAATNMFAYWNSDRMVLSMYGAHEVDAGTAPDLHRLVAELAARAALPMPRVFLMDNPQPNAFATGRNPENAAVAVTTGLMQSLRREELAGVIAHELAHIKHHDTLLMTITATIAGAISMLAQFGMFFGGGNRGNNGPGIIGSLAMMILAPLGAMLVQMAISRTREYAADEMGARICGQPMWLASALAKIDDAAHQVPNREAERAPATAHMFIINPLSGHGMDNLFATHPSTENRIAALQRLAGQSGSATPDPAPAPRGPWNGGAPRRGPWG.

A helical membrane pass occupies residues 16-36 (LFMGVGYLIGGAAGAMIALVV). Position 130 (H130) interacts with Zn(2+). The active site involves E131. Zn(2+) is bound at residue H134. The next 2 helical transmembrane spans lie at 145–165 (ITATIAGAISMLAQFGMFFGG) and 172–192 (GPGIIGSLAMMILAPLGAMLV). Residue E201 coordinates Zn(2+). A disordered region spans residues 278–307 (AGQSGSATPDPAPAPRGPWNGGAPRRGPWG).

The protein belongs to the peptidase M48B family. Zn(2+) is required as a cofactor.

Its subcellular location is the cell inner membrane. This Nitrobacter hamburgensis (strain DSM 10229 / NCIMB 13809 / X14) protein is Protease HtpX homolog.